The chain runs to 1882 residues: uncharacterized protein (1882 aa).

Residues 16–36 (FFLLFGIIFVLFSIIFLETSI) form a helical membrane-spanning segment. 4 disordered regions span residues 103–129 (DFGS…DVND), 220–306 (FPGD…ESET), 492–513 (VALA…VKDP), and 658–698 (QTDE…TKST). Residues 221–239 (PGDKGKGEDKKTTKKKSEI) show a composition bias toward basic and acidic residues. The segment covering 240–249 (KQASSATTVL) has biased composition (polar residues). Basic and acidic residues-rich tracts occupy residues 259 to 275 (TDAK…KDSN), 284 to 294 (NKDKVWFKSDE), and 500 to 511 (DKQESSADDGVK). The segment covering 667–698 (AKTTQGTTDSLTQLADASSSSSSSSTGDTKST) has biased composition (low complexity). 4 helical membrane-spanning segments follow: residues 987–1007 (ASVV…ILLI), 1037–1057 (VFAG…AFLL), 1080–1100 (WISF…ISWI), and 1154–1174 (LFTY…AGTI). 2 disordered regions span residues 1233-1253 (DQIQ…EHPY) and 1572-1598 (KDGQ…TSST). The span at 1234 to 1245 (QIQQQQQQQQQQ) shows a compositional bias: low complexity. Residues 1583 to 1594 (TSSGGGSCGGGS) are compositionally biased toward gly residues. The next 4 membrane-spanning stretches (helical) occupy residues 1759–1779 (FLLG…GISM), 1807–1827 (FFIP…AGLL), 1828–1848 (VGVQ…VFEF), and 1851–1871 (YMVG…YFWI).

The protein belongs to the ABC-4 integral membrane protein family.

It is found in the cell membrane. This is an uncharacterized protein from Mycoplasma pneumoniae (strain ATCC 29342 / M129 / Subtype 1) (Mycoplasmoides pneumoniae).